A 192-amino-acid polypeptide reads, in one-letter code: uncharacterized protein (192 aa).

The 132-residue stretch at 29–160 (HRQAAVLIPI…PLDIYRRGDS (132 aa)) folds into the Nudix hydrolase domain. The short motif at 67 to 89 (GAVDDTDASAIAAALREAEEEVA) is the Nudix box element. Mg(2+) contacts are provided by E83 and E87.

It belongs to the Nudix hydrolase family. PCD1 subfamily. The cofactor is Mn(2+). Mg(2+) is required as a cofactor.

Probably mediates the hydrolysis of some nucleoside diphosphate derivatives. This is an uncharacterized protein from Escherichia coli (strain K12).